Consider the following 478-residue polypeptide: Ribulose bisphosphate carboxylase large chain (478 aa).

Residues 1 to 2 (MS) constitute a propeptide that is removed on maturation. P3 is modified (N-acetylproline). The residue at position 14 (K14) is an N6,N6,N6-trimethyllysine. Residues N123 and T173 each contribute to the substrate site. Residue K175 is the Proton acceptor of the active site. K177 provides a ligand contact to substrate. Mg(2+) is bound by residues K201, D203, and E204. K201 carries the N6-carboxylysine modification. H294 serves as the catalytic Proton acceptor. Substrate is bound by residues R295, H327, and S379.

This sequence belongs to the RuBisCO large chain family. Type I subfamily. As to quaternary structure, heterohexadecamer of 8 large chains and 8 small chains; disulfide-linked. The disulfide link is formed within the large subunit homodimers. The cofactor is Mg(2+). The disulfide bond which can form in the large chain dimeric partners within the hexadecamer appears to be associated with oxidative stress and protein turnover.

The protein resides in the plastid. Its subcellular location is the chloroplast. The catalysed reaction is 2 (2R)-3-phosphoglycerate + 2 H(+) = D-ribulose 1,5-bisphosphate + CO2 + H2O. The enzyme catalyses D-ribulose 1,5-bisphosphate + O2 = 2-phosphoglycolate + (2R)-3-phosphoglycerate + 2 H(+). RuBisCO catalyzes two reactions: the carboxylation of D-ribulose 1,5-bisphosphate, the primary event in carbon dioxide fixation, as well as the oxidative fragmentation of the pentose substrate in the photorespiration process. Both reactions occur simultaneously and in competition at the same active site. The sequence is that of Ribulose bisphosphate carboxylase large chain from Drimys granadensis.